We begin with the raw amino-acid sequence, 292 residues long: Coatomer subunit epsilon-1 (292 aa).

It belongs to the COPE family. As to quaternary structure, oligomeric complex that consists of at least the alpha, beta, beta', gamma, delta, epsilon and zeta subunits.

The protein resides in the cytoplasm. The protein localises to the golgi apparatus membrane. It is found in the cytoplasmic vesicle. It localises to the COPI-coated vesicle membrane. In terms of biological role, the coatomer is a cytosolic protein complex that binds to dilysine motifs and reversibly associates with Golgi non-clathrin-coated vesicles, which further mediate biosynthetic protein transport from the ER, via the Golgi up to the trans Golgi network. The coatomer complex is required for budding from Golgi membranes, and is essential for the retrograde Golgi-to-ER transport of dilysine-tagged proteins. The polypeptide is Coatomer subunit epsilon-1 (Arabidopsis thaliana (Mouse-ear cress)).